Consider the following 198-residue polypeptide: FMN-dependent NADH:quinone oxidoreductase (198 aa).

FMN-binding positions include 92–95 and 136–139; these read MWNL and SRGG.

It belongs to the azoreductase type 1 family. Homodimer. FMN is required as a cofactor.

The enzyme catalyses 2 a quinone + NADH + H(+) = 2 a 1,4-benzosemiquinone + NAD(+). It carries out the reaction N,N-dimethyl-1,4-phenylenediamine + anthranilate + 2 NAD(+) = 2-(4-dimethylaminophenyl)diazenylbenzoate + 2 NADH + 2 H(+). Quinone reductase that provides resistance to thiol-specific stress caused by electrophilic quinones. Its function is as follows. Also exhibits azoreductase activity. Catalyzes the reductive cleavage of the azo bond in aromatic azo compounds to the corresponding amines. In Clostridium perfringens (strain SM101 / Type A), this protein is FMN-dependent NADH:quinone oxidoreductase.